The sequence spans 421 residues: Testin (421 aa).

The PET domain maps to 92–199; it reads MILTNPVAAK…GDVKLPREMD (108 aa). The tract at residues 133 to 164 is disordered; sequence EKQPVAGSEGAQYRKKQLAKQLPAHDQDPSKC. Residues 155-164 show a composition bias toward basic and acidic residues; sequence PAHDQDPSKC. LIM zinc-binding domains follow at residues 234–297, 299–359, and 362–421; these read YSCY…CDSE, PRCA…NHAV, and QGCH…KMMS.

It belongs to the prickle / espinas / testin family. Interacts via LIM domain 1 with ZYX. Interacts (via LIM domain 3) with ENAH and VASP. Interacts with ALKBH4, talin, actin, alpha-actinin, GRIP1 and PXN. Interacts (via LIM domain 2) with ACTL7A (via N-terminus). Heterodimer with ACTL7A; the heterodimer interacts with ENAH to form a heterotrimer.

It is found in the cytoplasm. The protein resides in the cell junction. The protein localises to the focal adhesion. In terms of biological role, scaffold protein that may play a role in cell adhesion, cell spreading and in the reorganization of the actin cytoskeleton. Plays a role in the regulation of cell proliferation. May act as a tumor suppressor. The chain is Testin (TES) from Neofelis nebulosa (Clouded leopard).